The chain runs to 170 residues: VIP peptides (170 aa).

Residues 1-21 (MEARSKPQFLAFLILFSVLFS) form the signal peptide. Positions 22–79 (QSLAWPLFGPPSVVRLDDRMPFEGAGDPDQVSLKADSDILQNPLAENGTPYYDVSRNA) are excised as a propeptide. Serine 76 is subject to Phosphoserine. At isoleucine 107 the chain carries Isoleucine amide. Residue asparagine 133 is glycosylated (N-linked (GlcNAc...) asparagine). Position 152 is an asparagine amide (asparagine 152). Positions 156 to 170 (SSEGDSADFLEELEK) are excised as a propeptide.

It belongs to the glucagon family.

The protein localises to the secreted. Functionally, VIP is a neuropeptide involved in a diverse array of physiological processes through activating the PACAP subfamily of class B1 G protein-coupled receptors: VIP receptor 1 (VPR1) and VIP receptor 2 (VPR2). Abundantly expressed throughout the CNS and peripheral nervous systems where they primarily exert neuroprotective and immune modulatory roles. Also causes vasodilation, lowers arterial blood pressure, stimulates myocardial contractility, increases glycogenolysis and relaxes the smooth muscle of trachea, stomach and gall bladder. PHM-27 and PHV-42 are two bioactive forms from proteolysis of the same precursor protein, that cause vasodilation. PHM-27 is a potent agonist of the calcitonin receptor CALCR, with similar efficacy as calcitonin. The polypeptide is VIP peptides (Vip) (Mus musculus (Mouse)).